A 192-amino-acid polypeptide reads, in one-letter code: Thymidine kinase (192 aa).

Residues 9 to 16 (GAMNSGKT) and 85 to 88 (DEAQ) contribute to the ATP site. Glu86 (proton acceptor) is an active-site residue. Cys143, Cys146, Cys180, and His183 together coordinate Zn(2+).

It belongs to the thymidine kinase family. Homotetramer.

It localises to the cytoplasm. The enzyme catalyses thymidine + ATP = dTMP + ADP + H(+). This is Thymidine kinase from Lactiplantibacillus plantarum (strain ATCC BAA-793 / NCIMB 8826 / WCFS1) (Lactobacillus plantarum).